The sequence spans 449 residues: Adenylosuccinate lyase (449 aa).

Residues 9 to 10 (RY), 75 to 77 (KHD), and 102 to 103 (TS) contribute to the N(6)-(1,2-dicarboxyethyl)-AMP site. The active-site Proton donor/acceptor is the H150. Q224 serves as a coordination point for N(6)-(1,2-dicarboxyethyl)-AMP. Residue S275 is the Proton donor/acceptor of the active site. Residues S276, 281 to 283 (KMN), and 320 to 324 (SSERI) contribute to the N(6)-(1,2-dicarboxyethyl)-AMP site.

Belongs to the lyase 1 family. Adenylosuccinate lyase subfamily. As to quaternary structure, homotetramer. Residues from neighboring subunits contribute catalytic and substrate-binding residues to each active site.

It catalyses the reaction N(6)-(1,2-dicarboxyethyl)-AMP = fumarate + AMP. It carries out the reaction (2S)-2-[5-amino-1-(5-phospho-beta-D-ribosyl)imidazole-4-carboxamido]succinate = 5-amino-1-(5-phospho-beta-D-ribosyl)imidazole-4-carboxamide + fumarate. Its pathway is purine metabolism; AMP biosynthesis via de novo pathway; AMP from IMP: step 2/2. It functions in the pathway purine metabolism; IMP biosynthesis via de novo pathway; 5-amino-1-(5-phospho-D-ribosyl)imidazole-4-carboxamide from 5-amino-1-(5-phospho-D-ribosyl)imidazole-4-carboxylate: step 2/2. Catalyzes two reactions in de novo purine nucleotide biosynthesis. Catalyzes the breakdown of 5-aminoimidazole- (N-succinylocarboxamide) ribotide (SAICAR or 2-[5-amino-1-(5-phospho-beta-D-ribosyl)imidazole-4-carboxamido]succinate) to 5-aminoimidazole-4-carboxamide ribotide (AICAR or 5-amino-1-(5-phospho-beta-D-ribosyl)imidazole-4-carboxamide) and fumarate, and of adenylosuccinate (ADS or N(6)-(1,2-dicarboxyethyl)-AMP) to adenosine monophosphate (AMP) and fumarate. This chain is Adenylosuccinate lyase (purB), found in Methanothermobacter thermautotrophicus (strain ATCC 29096 / DSM 1053 / JCM 10044 / NBRC 100330 / Delta H) (Methanobacterium thermoautotrophicum).